The sequence spans 102 residues: Small ribosomal subunit protein uS10 (102 aa).

The protein belongs to the universal ribosomal protein uS10 family. Part of the 30S ribosomal subunit.

In terms of biological role, involved in the binding of tRNA to the ribosomes. The sequence is that of Small ribosomal subunit protein uS10 from Exiguobacterium sibiricum (strain DSM 17290 / CCUG 55495 / CIP 109462 / JCM 13490 / 255-15).